Reading from the N-terminus, the 97-residue chain is Secreted LysM effector Mg1LysM (97 aa).

Positions 1 to 18 (MQFTALVAALLSVAAVQA) are cleaved as a signal peptide. The 48-residue stretch at 37 to 84 (QQYVARSGDTLTKIAQEIYHDVVGVCDIARANNLADPNRIDAGTPYTI) folds into the LysM domain. The chitin site is built by G44, T48, N74, and I76.

The protein belongs to the secreted LysM effector family. In terms of assembly, forms homodimers in a chitin-independent manner through interactions at the N-termini of Mg1LysM monomers. Homodimers are further polymerized in a chitin-dependent manner.

Its subcellular location is the secreted. It is found in the cell wall. Functionally, secreted effector that enables the plant pathogenic fungus to manipulate host defenses for successful infection. Binds chitin but not cellulose or xylan. Chitin-induced polymerization of homodimers forms a contiguous Mg1LysM highly oligomeric super-complexe that is anchored to the chitin in the fungal cell wall to prevent hydrolysis by host chitinases. The protein is Secreted LysM effector Mg1LysM of Zymoseptoria tritici (strain ST99CH_3D7).